Here is a 401-residue protein sequence, read N- to C-terminus: Argininosuccinate synthase (401 aa).

ATP is bound by residues 10-18 (AYSGGVDTS) and Ala38. Residue Tyr89 participates in L-citrulline binding. Gly119 provides a ligand contact to ATP. Residues Thr121, Asn125, and Asp126 each coordinate L-aspartate. Asn125 is a binding site for L-citrulline. L-citrulline-binding residues include Arg129, Ser177, Ser186, Glu262, and Tyr274.

The protein belongs to the argininosuccinate synthase family. Type 1 subfamily. In terms of assembly, homotetramer.

The protein resides in the cytoplasm. The enzyme catalyses L-citrulline + L-aspartate + ATP = 2-(N(omega)-L-arginino)succinate + AMP + diphosphate + H(+). It participates in amino-acid biosynthesis; L-arginine biosynthesis; L-arginine from L-ornithine and carbamoyl phosphate: step 2/3. This Prochlorococcus marinus (strain MIT 9303) protein is Argininosuccinate synthase.